We begin with the raw amino-acid sequence, 208 residues long: Holliday junction branch migration complex subunit RuvA (208 aa).

A domain I region spans residues 1–63 (MIGMLTGRVE…QDSVTLYGFL (63 aa)). Positions 64–142 (DRDSKRVFLQ…LNQSDDASAG (79 aa)) are domain II. The interval 143–151 (NAPYQPTVD) is flexible linker. The domain III stretch occupies residues 151 to 208 (DAGVEQVVEGLVSLGWRQQDAQRAVNEACAENDVPMPLASDDAPRVLRLALARMDRGR).

The protein belongs to the RuvA family. As to quaternary structure, homotetramer. Forms an RuvA(8)-RuvB(12)-Holliday junction (HJ) complex. HJ DNA is sandwiched between 2 RuvA tetramers; dsDNA enters through RuvA and exits via RuvB. An RuvB hexamer assembles on each DNA strand where it exits the tetramer. Each RuvB hexamer is contacted by two RuvA subunits (via domain III) on 2 adjacent RuvB subunits; this complex drives branch migration. In the full resolvosome a probable DNA-RuvA(4)-RuvB(12)-RuvC(2) complex forms which resolves the HJ.

It localises to the cytoplasm. In terms of biological role, the RuvA-RuvB-RuvC complex processes Holliday junction (HJ) DNA during genetic recombination and DNA repair, while the RuvA-RuvB complex plays an important role in the rescue of blocked DNA replication forks via replication fork reversal (RFR). RuvA specifically binds to HJ cruciform DNA, conferring on it an open structure. The RuvB hexamer acts as an ATP-dependent pump, pulling dsDNA into and through the RuvAB complex. HJ branch migration allows RuvC to scan DNA until it finds its consensus sequence, where it cleaves and resolves the cruciform DNA. The chain is Holliday junction branch migration complex subunit RuvA from Bifidobacterium longum subsp. infantis (strain ATCC 15697 / DSM 20088 / JCM 1222 / NCTC 11817 / S12).